The sequence spans 304 residues: Negative regulator of the PHO system (304 aa).

The 291-residue stretch at 7-297 (FKQLEKVGNG…AKDALNHPWF (291 aa)) folds into the Protein kinase domain. Residues 13-21 (VGNGTYATV) and K36 contribute to the ATP site. The active-site Proton acceptor is D133.

The protein belongs to the protein kinase superfamily. CMGC Ser/Thr protein kinase family. CDC2/CDKX subfamily. As to quaternary structure, interacts with a number of cyclins.

It catalyses the reaction L-seryl-[protein] + ATP = O-phospho-L-seryl-[protein] + ADP + H(+). The enzyme catalyses L-threonyl-[protein] + ATP = O-phospho-L-threonyl-[protein] + ADP + H(+). In terms of biological role, when phosphate concentrations are high it phosphorylates the PHO4 transcription factor thus establishing repression. This is Negative regulator of the PHO system (PHO85) from Kluyveromyces lactis (strain ATCC 8585 / CBS 2359 / DSM 70799 / NBRC 1267 / NRRL Y-1140 / WM37) (Yeast).